Here is a 443-residue protein sequence, read N- to C-terminus: Serine--tRNA ligase (443 aa).

Residue 246 to 248 (TAE) coordinates L-serine. 277–279 (RAE) lines the ATP pocket. Position 300 (Glu300) interacts with L-serine. 367–370 (EISS) is an ATP binding site. Residue Ser402 coordinates L-serine.

It belongs to the class-II aminoacyl-tRNA synthetase family. Type-1 seryl-tRNA synthetase subfamily. In terms of assembly, homodimer. The tRNA molecule binds across the dimer.

Its subcellular location is the cytoplasm. The catalysed reaction is tRNA(Ser) + L-serine + ATP = L-seryl-tRNA(Ser) + AMP + diphosphate + H(+). The enzyme catalyses tRNA(Sec) + L-serine + ATP = L-seryl-tRNA(Sec) + AMP + diphosphate + H(+). It participates in aminoacyl-tRNA biosynthesis; selenocysteinyl-tRNA(Sec) biosynthesis; L-seryl-tRNA(Sec) from L-serine and tRNA(Sec): step 1/1. Functionally, catalyzes the attachment of serine to tRNA(Ser). Is also able to aminoacylate tRNA(Sec) with serine, to form the misacylated tRNA L-seryl-tRNA(Sec), which will be further converted into selenocysteinyl-tRNA(Sec). The sequence is that of Serine--tRNA ligase from Bradyrhizobium diazoefficiens (strain JCM 10833 / BCRC 13528 / IAM 13628 / NBRC 14792 / USDA 110).